The chain runs to 584 residues: Segmentation polarity homeobox protein engrailed (584 aa).

5 disordered regions span residues 1–27 (MALEDRCSPQSAPSPPGCLPHSPPQQH), 141–198 (EESD…SKPS), 343–380 (IGQAQSTTPVTTPSSRPSQLASPPPASNASTISSSSST), 392–451 (CSSA…GGKN), and 465–492 (DRPSSGPRYRRPKQPKDKTNDEKRPRTA). A compositionally biased stretch (pro residues) spans 12 to 23 (APSPPGCLPHSP). Residues 160-174 (TEEDEEEDDDIDVDD) are compositionally biased toward acidic residues. Residues 189-198 (HQQSKQSKPS) are compositionally biased toward polar residues. Low complexity-rich tracts occupy residues 348 to 380 (STTPVTTPSSRPSQLASPPPASNASTISSSSST) and 392 to 405 (CSSAASSLNSSPSS). Residues 478 to 489 (QPKDKTNDEKRP) show a composition bias toward basic and acidic residues. The segment at residues 486-545 (EKRPRTAFSSEQLARLKREFNENRYLTERRRQQLSSELGLNEAQIKIWFQNKRAKIKKST) is a DNA-binding region (homeobox).

Belongs to the engrailed homeobox family.

It is found in the nucleus. This protein specifies the body segmentation pattern. It is required for the development of the central nervous system. Transcriptional regulator that repress activated promoters. The polypeptide is Segmentation polarity homeobox protein engrailed (en) (Drosophila virilis (Fruit fly)).